Consider the following 551-residue polypeptide: Protein PLASTID TRANSCRIPTIONALLY ACTIVE 12, chloroplastic (551 aa).

The N-terminal 47 residues, 1–47 (MASCSRTWLLPGMAPQATAQTVPRPLQSLKVFAGLPHRRRVLFSGVS), are a transit peptide targeting the chloroplast. 2 disordered regions span residues 76–161 (SSYF…EGES) and 463–529 (HSYN…DQLS). A compositionally biased stretch (low complexity) spans 109–119 (RVRAARAPAPV). Composition is skewed to acidic residues over residues 467-476 (EDSDDDEEDA) and 485-498 (SLED…DAED). The span at 505 to 516 (RNWSVLKTTGQA) shows a compositional bias: polar residues. Basic and acidic residues predominate over residues 518-529 (NPKEKSKKDQLS).

In terms of assembly, component of the plastid-encoded plastid RNA polymerase (PEP) complex.

It localises to the plastid. The protein localises to the chloroplast. Required for the activity of the plastid-encoded RNA polymerase (PEP) and full expression of genes transcribed by PEP. Required for the proper build-up and formation of the PEP-complex. Binds single-stranded (ss) DNA and RNA, but not double-stranded (ds) DNA. This chain is Protein PLASTID TRANSCRIPTIONALLY ACTIVE 12, chloroplastic, found in Oryza sativa subsp. japonica (Rice).